The primary structure comprises 215 residues: Ribonuclease T (215 aa).

Residues 20–194 (VVIDVETAGF…YDTMQTAKLF (175 aa)) enclose the Exonuclease domain. Mg(2+)-binding residues include D23, E25, H181, and D186. H181 (proton donor/acceptor) is an active-site residue.

The protein belongs to the RNase T family. Homodimer. Mg(2+) serves as cofactor.

Functionally, trims short 3' overhangs of a variety of RNA species, leaving a one or two nucleotide 3' overhang. Responsible for the end-turnover of tRNA: specifically removes the terminal AMP residue from uncharged tRNA (tRNA-C-C-A). Also appears to be involved in tRNA biosynthesis. This is Ribonuclease T from Yersinia enterocolitica serotype O:8 / biotype 1B (strain NCTC 13174 / 8081).